Reading from the N-terminus, the 576-residue chain is Proline--tRNA ligase (576 aa).

Belongs to the class-II aminoacyl-tRNA synthetase family. ProS type 1 subfamily. As to quaternary structure, homodimer.

The protein localises to the cytoplasm. The enzyme catalyses tRNA(Pro) + L-proline + ATP = L-prolyl-tRNA(Pro) + AMP + diphosphate. Catalyzes the attachment of proline to tRNA(Pro) in a two-step reaction: proline is first activated by ATP to form Pro-AMP and then transferred to the acceptor end of tRNA(Pro). As ProRS can inadvertently accommodate and process non-cognate amino acids such as alanine and cysteine, to avoid such errors it has two additional distinct editing activities against alanine. One activity is designated as 'pretransfer' editing and involves the tRNA(Pro)-independent hydrolysis of activated Ala-AMP. The other activity is designated 'posttransfer' editing and involves deacylation of mischarged Ala-tRNA(Pro). The misacylated Cys-tRNA(Pro) is not edited by ProRS. In Bordetella pertussis (strain Tohama I / ATCC BAA-589 / NCTC 13251), this protein is Proline--tRNA ligase.